Here is a 912-residue protein sequence, read N- to C-terminus: Nitrate reductase [NADH] (912 aa).

Residues 1–99 (SVEPRQPFGR…PRDEGTADAW (99 aa)) are disordered. Positions 13-23 (APATAPTARAP) are enriched in low complexity. Residues 54-68 (AEEDEEDDDEDDEGH) are compositionally biased toward acidic residues. Residues 85–94 (PSTRDPRDEG) are compositionally biased toward basic and acidic residues. Residue Cys186 participates in Mo-molybdopterin binding. A Cytochrome b5 heme-binding domain is found at 535 to 610 (DKQFTMSEVR…LDTYRIGELI (76 aa)). 2 residues coordinate heme: His570 and His593. One can recognise an FAD-binding FR-type domain in the interval 651 to 764 (REKVPCRLVD…KGPLGHVEYT (114 aa)). FAD-binding positions include 703-706 (RAYT), 720-724 (LVKVY), Phe725, Phe732, 737-739 (LMT), Ser788, and Thr791.

It belongs to the nitrate reductase family. In terms of assembly, homodimer. The cofactor is FAD. Heme serves as cofactor. Mo-molybdopterin is required as a cofactor.

The catalysed reaction is nitrite + NAD(+) + H2O = nitrate + NADH + H(+). Nitrate reductase is a key enzyme involved in the first step of nitrate assimilation in plants, fungi and bacteria. This Hordeum vulgare (Barley) protein is Nitrate reductase [NADH].